Here is a 931-residue protein sequence, read N- to C-terminus: Dymeclin (931 aa).

Disordered stretches follow at residues 1 to 53 (MGVA…SSTT), 599 to 618 (SPSKINTNNSNNNVKDNTNN), and 839 to 931 (DANN…EKTN). The N-myristoyl glycine moiety is linked to residue Gly2. Low complexity-rich tracts occupy residues 27–49 (NNNKNNNNNNNNNNNNNNNNNNN) and 601–618 (SKINTNNSNNNVKDNTNN). Over residues 839–858 (DANNFTPKKQLSSDQLHSPP) the composition is skewed to polar residues. 2 stretches are compositionally biased toward low complexity: residues 859–876 (TNTTTTTTTTTNSTSSNT) and 889–901 (QLQQQNNLRNQEQ). Over residues 919–931 (TTGVELSSTEKTN) the composition is skewed to polar residues.

It belongs to the dymeclin family.

The polypeptide is Dymeclin (dym) (Dictyostelium discoideum (Social amoeba)).